The chain runs to 307 residues: Small ribosomal subunit biogenesis GTPase RsgA (307 aa).

A CP-type G domain is found at H78 to L240. GTP is bound by residues N128–D131 and G182–T190. Residues C264, C269, H271, and C277 each coordinate Zn(2+).

It belongs to the TRAFAC class YlqF/YawG GTPase family. RsgA subfamily. In terms of assembly, monomer. Associates with 30S ribosomal subunit, binds 16S rRNA. Zn(2+) serves as cofactor.

The protein localises to the cytoplasm. One of several proteins that assist in the late maturation steps of the functional core of the 30S ribosomal subunit. Helps release RbfA from mature subunits. May play a role in the assembly of ribosomal proteins into the subunit. Circularly permuted GTPase that catalyzes slow GTP hydrolysis, GTPase activity is stimulated by the 30S ribosomal subunit. This Cytophaga hutchinsonii (strain ATCC 33406 / DSM 1761 / CIP 103989 / NBRC 15051 / NCIMB 9469 / D465) protein is Small ribosomal subunit biogenesis GTPase RsgA.